The chain runs to 678 residues: Glycine--tRNA ligase beta subunit (678 aa).

The protein belongs to the class-II aminoacyl-tRNA synthetase family. Tetramer of two alpha and two beta subunits.

It localises to the cytoplasm. The enzyme catalyses tRNA(Gly) + glycine + ATP = glycyl-tRNA(Gly) + AMP + diphosphate. In Streptococcus pneumoniae (strain Taiwan19F-14), this protein is Glycine--tRNA ligase beta subunit.